We begin with the raw amino-acid sequence, 496 residues long: Matrilin-1 (496 aa).

A signal peptide spans 1–22 (MRVLSGTSLMLCSLLLLLQALC). The VWFA 1 domain maps to 23 to 222 (SPGLAPQSRG…SRKFQEAFCV (200 aa)). N-linked (GlcNAc...) asparagine glycosylation is present at N76. Positions 223 to 263 (VSDLCATGDHDCEQVCISSPGSYTCACHEGFTLNSDGKTCN) constitute an EGF-like domain. 3 cysteine pairs are disulfide-bonded: C227–C238, C234–C247, and C249–C262. A VWFA 2 domain is found at 264-453 (VCSGGGGSSA…GKKLQKKICV (190 aa)). An N-linked (GalNAc...) asparagine glycan is attached at N344. The stretch at 467 to 495 (QAKVEGLLQALTRKLEAVSKRLAILENTV) forms a coiled coil.

In terms of assembly, homotrimer. Part of a complex composed of MATN1 (via VWFA1 domain), type 2 collagens and type 6 collagens. Forms a complex (via covalent bonds) with ACAN; the interaction increases in abundance with increasing age of the organism via an increase in occupancy of MATN1 binding sites. Interacts with COMP. N-glycosylated; reduces binding affinity for type 2 collagens.

It localises to the secreted. The protein resides in the extracellular space. The protein localises to the extracellular matrix. Its function is as follows. A major component of the extracellular matrix of non-articular cartilage. Binds to type 2 collagens and forms long concatenated protein networks as part of the extracellular matrix. Required for the network-like organization and bundling of collagen fibrils surrounding chondrocytes in the zones of maturation and hypertrophy. Required for mechanotransduction and adaption to mechanical loading in cartilage chondrocytes, resulting in an increase in expression of the extracellular matrix components ACAN and COL2A1. Acts as a moderator of angiogenesis in response to injury. The sequence is that of Matrilin-1 from Homo sapiens (Human).